Reading from the N-terminus, the 215-residue chain is uncharacterized protein (215 aa).

5 helical membrane-spanning segments follow: residues 1–21 (MTAEFIIRLILAAIACGAIGM), 36–56 (VLIGMGSALFMIVSKYGFADV), 67–87 (SRIAAQVVTGVGFIGAGNILV), 92–112 (IVGLTTAADIWVTAAIGMVIG), and 118–138 (LGIYGSVMTLLVLEVFHQLTF).

The protein belongs to the MgtC/SapB family.

Its subcellular location is the cell inner membrane. This is an uncharacterized protein from Escherichia coli O157:H7.